A 623-amino-acid polypeptide reads, in one-letter code: MINKITKPKLLIGYYLLLFSLIRCLPEKESSYKDLFTSLLFLPNQTNSNQVNSVSINNDPANPNPVNPASANNNQVNAVPENDDPANLNPVNPASANSNQVNAAPENGSPADPNPANLASANNNQVNAVPANNYFTKEDSSNNIPKKVNSKNVEIKVLSHNVFMLPTNLPRWGNLGHDERAKRISKSDYVKNQDVIVFEEAFDTSARKILLDNLREEYPYQTDVVGRTKKNWDASLGNFRSYSLVNGGVVILSKWPIEEKIQYIFNDSGCGADWFANKGFVYVKINKEGKKFHVIGTHAQSQDQNCSNLGIPNRANQFDDIRNFIYSKNIPKDETVLIVGDLNVIKESNEYYDMISRLNVNEPRYVGVPFTWDAKTNEIAAYYYENEEPVYLDYIFVSKSHAQPPVWQNLAYDPVSKQTWTVSGYTSDEFSDHYPIYGFVYADPSTPTKSGHKKKYDQVSFQSAANGKYIQADPNRKNGWLKADAVIETDFTKFNLLQEGNLNPSCIKNGLVRIESSRFLNYFWNWWLGGGSGNYGYYSKFNDASNQLEIINLSDECLENGSKIVFKDYDTYSRNHYYLTVWDKGNWNEHLYLWKDSISQREIFYLKLNSTPVRNWSADLIYR.

Residues 1–25 (MINKITKPKLLIGYYLLLFSLIRCL) form the signal peptide. 2 stretches are compositionally biased toward low complexity: residues 51–61 (VNSVSINNDPA) and 67–80 (NPAS…NAVP). The tract at residues 51-121 (VNSVSINNDP…DPNPANLASA (71 aa)) is disordered. Residues 89–102 (NPVNPASANSNQVN) are compositionally biased toward polar residues. Over residues 110 to 121 (PADPNPANLASA) the composition is skewed to low complexity.

It is found in the secreted. It catalyses the reaction a sphingomyelin + H2O = phosphocholine + an N-acylsphing-4-enine + H(+). In Leptospira interrogans serogroup Icterohaemorrhagiae serovar Lai (strain 56601), this protein is Sphingomyelinase C 2 (sph2).